The chain runs to 278 residues: Lipoyl-[GcvH]:protein N-lipoyltransferase (278 aa).

The BPL/LPL catalytic domain maps to Arg44 to Val250. Catalysis depends on Cys149, which acts as the Acyl-thioester intermediate.

This sequence belongs to the octanoyltransferase LipL family.

It carries out the reaction N(6)-[(R)-lipoyl]-L-lysyl-[glycine-cleavage complex H protein] + L-lysyl-[lipoyl-carrier protein] = L-lysyl-[glycine-cleavage complex H protein] + N(6)-[(R)-lipoyl]-L-lysyl-[lipoyl-carrier protein]. Its pathway is protein modification; protein lipoylation via exogenous pathway. In terms of biological role, catalyzes the amidotransfer (transamidation) of the lipoyl moiety from lipoyl-GcvH to the lipoyl domain of the E2 subunit of lipoate-dependent enzymes. Takes part in a pathway for scavenging of lipoic acid derived from eukaryotic host cells. Cannot use lipoyl-tripeptide (DK(L)A), lipoamide (LD), or free lipoate as substrate. In Listeria monocytogenes serovar 1/2a (strain ATCC BAA-679 / EGD-e), this protein is Lipoyl-[GcvH]:protein N-lipoyltransferase.